Reading from the N-terminus, the 338-residue chain is 3-phosphoshikimate 1-carboxyvinyltransferase 2 (338 aa).

Residue Arg-25 participates in phosphoenolpyruvate binding. Ser-72, Ser-73, Gln-74, Ser-100, Asp-225, and Lys-252 together coordinate 3-phosphoshikimate. Gln-74 serves as a coordination point for phosphoenolpyruvate. The Proton acceptor role is filled by Asp-225. Phosphoenolpyruvate is bound by residues Arg-256, Arg-298, and Lys-323.

This sequence belongs to the EPSP synthase family.

The protein localises to the plastid. Its subcellular location is the chloroplast. It catalyses the reaction 3-phosphoshikimate + phosphoenolpyruvate = 5-O-(1-carboxyvinyl)-3-phosphoshikimate + phosphate. Its pathway is metabolic intermediate biosynthesis; chorismate biosynthesis; chorismate from D-erythrose 4-phosphate and phosphoenolpyruvate: step 6/7. In terms of biological role, catalyzes the transfer of the enolpyruvyl moiety of phosphoenolpyruvate (PEP) to the 5-hydroxyl of shikimate-3-phosphate (S3P) to produce enolpyruvyl shikimate-3-phosphate and inorganic phosphate. The chain is 3-phosphoshikimate 1-carboxyvinyltransferase 2 (EPSPS-2) from Nicotiana tabacum (Common tobacco).